The primary structure comprises 396 residues: Cell adhesion molecule 3 (396 aa).

The N-terminal stretch at 1-22 (MGAPSALPLLLLLACSWAPGGA) is a signal peptide. Residues 23–124 (NLSQDDSQPW…VRTAKSLVTV (102 aa)) enclose the Ig-like V-type domain. Residues 23–328 (NLSQDDSQPW…PVPSSSSTYH (306 aa)) are Extracellular-facing. 3 disulfide bridges follow: Cys48/Cys108, Cys150/Cys207, and Cys252/Cys297. Ig-like C2-type domains lie at 128-226 (PQKP…QRIE) and 231-313 (PTAM…FTLN). An N-linked (GlcNAc...) asparagine glycan is attached at Asn288. Residues 329 to 349 (AIIGGIVAFIVFLLLILLIFL) traverse the membrane as a helical segment. Residues 350–396 (GHYLIRHKGTYLTHEAKGSDDAPDADTAIINAEGGQSGGDDKKEYFI) are Cytoplasmic-facing. Residues 365-396 (AKGSDDAPDADTAIINAEGGQSGGDDKKEYFI) are disordered. Ser386 carries the phosphoserine modification.

Belongs to the nectin family. Homodimer. Can form trans-heterodimers with NECTIN3. Interacts with EPB41L1, DLG3, PALS2 and CASK. As to expression, mainly expressed in brain, in neuronal cell bodies of cerebellum, cortex, hippocampus, hypothalamus and spinal cord. In spinal cord predominantly expressed in motor neurons. Expressed in axons, presynaptic nerve terminals, glia cell processes.

It localises to the cell membrane. It is found in the cell junction. Functionally, involved in cell-cell adhesion. Has both calcium-independent homophilic cell-cell adhesion activity and calcium-independent heterophilic cell-cell adhesion activity with IGSF4, NECTIN1 and NECTIN3. Interaction with EPB41L1 may regulate structure or function of cell-cell junctions. The polypeptide is Cell adhesion molecule 3 (Cadm3) (Mus musculus (Mouse)).